Here is a 514-residue protein sequence, read N- to C-terminus: Prolyl 3,4-dihydroxylase OGFOD1 (514 aa).

Residues 114-221 enclose the Fe2OG dioxygenase domain; that stretch reads GAVDCSCNIY…RVSISGWFHT (108 aa). Fe cation-binding residues include histidine 132 and aspartate 134. Tyrosine 146 is a 2-oxoglutarate binding site. Histidine 200 provides a ligand contact to Fe cation. Arginine 212 contributes to the 2-oxoglutarate binding site.

This sequence belongs to the TPA1 family. As to quaternary structure, monomer and homodimer. Fe(2+) is required as a cofactor. The cofactor is L-ascorbate.

It carries out the reaction [ribosomal protein uS12]-L-proline + 2-oxoglutarate + O2 = [ribosomal protein uS12]-(3S)-3-hydroxy-L-proline + succinate + CO2. The catalysed reaction is [ribosomal protein uS12]-(3S)-3-hydroxy-L-proline + 2-oxoglutarate + O2 = [ribosomal protein uS12]-(3S)-3,4-dihydroxy-L-proline + succinate + CO2. Functionally, prolyl 3,4-dihydroxylase that catalyzes 3,4-dihydroxylation of 'Pro-61' of small ribosomal subunit uS12 (RPS23), thereby regulating protein translation termination efficiency. The protein is Prolyl 3,4-dihydroxylase OGFOD1 (Ogd) of Ostreococcus tauri.